The following is a 543-amino-acid chain: Secreted effector protein SptP (543 aa).

A chaperone-binding region spans residues 35–139 (TDKAYVAPEK…FINLIKNKDN (105 aa)). One can recognise a Bacterial Rho-GAP domain in the interval 162–293 (DVGAESKQPL…TAELEKIKAG (132 aa)). Residues 315–543 (IPINQQTQVK…QAQLLMTTAS (229 aa)) enclose the Tyrosine-protein phosphatase domain. Cys-481 (phosphocysteine intermediate) is an active-site residue.

In terms of assembly, forms a complex with SicP.

The protein resides in the secreted. The protein localises to the host cytoplasm. The enzyme catalyses O-phospho-L-tyrosyl-[protein] + H2O = L-tyrosyl-[protein] + phosphate. Its function is as follows. Effector proteins function to alter host cell physiology and promote bacterial survival in host tissues. This protein includes tyrosine phosphatase and GTPase activating protein (GAP) activities. After bacterial internalization, GAP mediates the reversal of the cytoskeletal changes induced by SopE. This function is independent of its tyrosine phosphatase activity, which remains unclear. The sequence is that of Secreted effector protein SptP (sptP) from Salmonella typhi.